The primary structure comprises 340 residues: CMP-sialic acid transporter 1 (340 aa).

The Cytoplasmic segment spans residues 1 to 5 (MAATP). A helical transmembrane segment spans residues 6–26 (WYFVAVLLTILTSSQGILTTL). The Lumenal segment spans residues 27–36 (SQSDGGYKYD). A helical transmembrane segment spans residues 37-57 (YATVPFLAEVFKLIISGLFLW). Residues 58-78 (REMRTSSSTTSRITTDWKSVR) are Cytoplasmic-facing. The helical transmembrane segment at 79-99 (LFVIPSLIYLIHNNVQFATLT) threads the bilayer. The Lumenal portion of the chain corresponds to 100–102 (YVD). The chain crosses the membrane as a helical span at residues 103-125 (TSTYQIMGNLKIVTTGILFRLFL). The Cytoplasmic portion of the chain corresponds to 126 to 168 (KRKLSKLQWMAIGLLAVGTTTSQVKGCGEASCDSLFTAPIQGY). Residues 169-189 (LLGILSAGLSALAGIYTEFLM) form a helical membrane-spanning segment. At 190–200 (KRNNDTLYWQN) the chain is on the lumenal side. The chain crosses the membrane as a helical span at residues 201–217 (LQLYTFGSLFNVARLIA). Residues 218-238 (DDFRHGFEKGPWWQRIFDGYS) lie on the Cytoplasmic side of the membrane. Residues 239–259 (ITTWLVVLNLGSTGLLVSWLM) traverse the membrane as a helical segment. Residues 260–282 (KYADNIVKVYSTSMAMLLTMVAS) are Lumenal-facing. Residues 283–303 (IYLFSFKPTLQLFLGIVICIM) form a helical membrane-spanning segment. Residues 304 to 340 (SLHMYFAPPHTLVDLPVTNEAHAKTLKQVVVEEKTDS) are Cytoplasmic-facing.

The protein belongs to the nucleotide-sugar transporter family. CMP-Sialate:CMP antiporter (TC 2.A.7.12) subfamily.

It is found in the golgi apparatus membrane. Its function is as follows. Essential protein. Sugar transporter involved in the transport of CMP-sialic acid from the cytoplasm into the Golgi. The protein is CMP-sialic acid transporter 1 of Arabidopsis thaliana (Mouse-ear cress).